The primary structure comprises 320 residues: ATP-dependent 6-phosphofructokinase (320 aa).

Gly-12 is a binding site for ATP. 22 to 26 (RGVVR) contacts ADP. ATP contacts are provided by residues 73 to 74 (RF) and 103 to 106 (GDGS). Asp-104 contacts Mg(2+). 126 to 128 (TID) serves as a coordination point for substrate. Asp-128 acts as the Proton acceptor in catalysis. Arg-155 provides a ligand contact to ADP. Residues Arg-163 and 170–172 (MGR) contribute to the substrate site. ADP-binding positions include 186–188 (GCE), Lys-212, and 214–216 (KKH). Substrate contacts are provided by residues Glu-223, Arg-244, and 250-253 (HIQR).

Belongs to the phosphofructokinase type A (PFKA) family. ATP-dependent PFK group I subfamily. Prokaryotic clade 'B1' sub-subfamily. As to quaternary structure, homotetramer. Requires Mg(2+) as cofactor.

It is found in the cytoplasm. It catalyses the reaction beta-D-fructose 6-phosphate + ATP = beta-D-fructose 1,6-bisphosphate + ADP + H(+). Its pathway is carbohydrate degradation; glycolysis; D-glyceraldehyde 3-phosphate and glycerone phosphate from D-glucose: step 3/4. Allosterically activated by ADP and other diphosphonucleosides, and allosterically inhibited by phosphoenolpyruvate. In terms of biological role, catalyzes the phosphorylation of D-fructose 6-phosphate to fructose 1,6-bisphosphate by ATP, the first committing step of glycolysis. This is ATP-dependent 6-phosphofructokinase from Blochmanniella floridana.